The following is a 105-amino-acid chain: Met repressor (105 aa).

Belongs to the MetJ family. As to quaternary structure, homodimer.

It localises to the cytoplasm. In terms of biological role, this regulatory protein, when combined with SAM (S-adenosylmethionine) represses the expression of the methionine regulon and of enzymes involved in SAM synthesis. This is Met repressor from Haemophilus influenzae (strain 86-028NP).